Here is a 436-residue protein sequence, read N- to C-terminus: Carboxypeptidase A5 (436 aa).

The first 33 residues, 1–33, serve as a signal peptide directing secretion; it reads MQGTPAGGTSPGPSPMDRQTLLVFSLILAAALG. Residues 34 to 126 constitute a propeptide, activation peptide; sequence QMNFTGDQVL…EREAMAKSRR (93 aa). The region spanning 138–431 is the Peptidase M14 domain; the sequence is SYHTLEEISS…MALRTIMEHT (294 aa). The Zn(2+) site is built by H196 and E199. Substrate contacts are provided by residues 196-199, R254, and 271-272; these read HSRE and NR. C265 and C288 are oxidised to a cystine. Residue H323 participates in Zn(2+) binding. Substrate-binding positions include 324–325 and Y375; that span reads SY. E397 (proton donor/acceptor) is an active-site residue.

The protein belongs to the peptidase M14 family. It depends on Zn(2+) as a cofactor.

The protein resides in the secreted. The polypeptide is Carboxypeptidase A5 (CPA5) (Macaca fascicularis (Crab-eating macaque)).